Reading from the N-terminus, the 492-residue chain is N-succinylglutamate 5-semialdehyde dehydrogenase (492 aa).

220 to 225 is an NAD(+) binding site; that stretch reads GSANTG. Catalysis depends on residues Glu243 and Cys277.

The protein belongs to the aldehyde dehydrogenase family. AstD subfamily.

It catalyses the reaction N-succinyl-L-glutamate 5-semialdehyde + NAD(+) + H2O = N-succinyl-L-glutamate + NADH + 2 H(+). It functions in the pathway amino-acid degradation; L-arginine degradation via AST pathway; L-glutamate and succinate from L-arginine: step 4/5. Its function is as follows. Catalyzes the NAD-dependent reduction of succinylglutamate semialdehyde into succinylglutamate. This chain is N-succinylglutamate 5-semialdehyde dehydrogenase, found in Escherichia coli O17:K52:H18 (strain UMN026 / ExPEC).